The sequence spans 136 residues: Organic hydroperoxide resistance protein OhrB (136 aa).

It belongs to the OsmC/Ohr family.

Functionally, involved in organic hydroperoxide resistance. This is Organic hydroperoxide resistance protein OhrB (ohrB) from Bacillus subtilis (strain 168).